Reading from the N-terminus, the 167-residue chain is Protein-export protein SecB (167 aa).

The protein belongs to the SecB family. In terms of assembly, homotetramer, a dimer of dimers. One homotetramer interacts with 1 SecA dimer.

The protein localises to the cytoplasm. Its function is as follows. One of the proteins required for the normal export of preproteins out of the cell cytoplasm. It is a molecular chaperone that binds to a subset of precursor proteins, maintaining them in a translocation-competent state. It also specifically binds to its receptor SecA. The protein is Protein-export protein SecB of Wolbachia pipientis wMel.